The chain runs to 618 residues: Uptake hydrogenase large subunit (618 aa).

Residues Cys75, Cys78, Cys597, and Cys600 each coordinate Ni(2+).

The protein belongs to the [NiFe]/[NiFeSe] hydrogenase large subunit family. In terms of assembly, heterodimer of a large and a small subunit. Requires Ni(2+) as cofactor.

The protein resides in the cell membrane. The enzyme catalyses H2 + A = AH2. Its function is as follows. This enzyme recycles the H(2) produced by nitrogenase to increase the production of ATP and to protect nitrogenase against inhibition or damage by O(2) under carbon- or phosphate-limited conditions. The protein is Uptake hydrogenase large subunit (hoxG) of Cupriavidus necator (strain ATCC 17699 / DSM 428 / KCTC 22496 / NCIMB 10442 / H16 / Stanier 337) (Ralstonia eutropha).